Consider the following 563-residue polypeptide: Merozoite receptor PK66 (563 aa).

The first 13 residues, 1–13 (MNKIYYILFLSAQ), serve as a signal peptide directing secretion. The Extracellular segment spans residues 14 to 487 (CLVHMGKCER…DGKHKKKMLL (474 aa)). N-linked (GlcNAc...) asparagine glycans are attached at residues asparagine 36, asparagine 107, asparagine 176, asparagine 189, asparagine 238, and asparagine 441. A helical membrane pass occupies residues 488–508 (IIIGVTGAVCVVAVASLFYFR). Topologically, residues 509–563 (KKAQDDKYDKMDQAEAYGKTANTRKDEMLDPEASFWGEDKRASHTTPVLMEKPYY) are cytoplasmic.

It belongs to the apicomplexan parasites AMA1 family.

The protein localises to the membrane. Its function is as follows. Merozoite receptor PK66 is a surface antigen involved in parasite invasion of erythrocytes. The protein is Merozoite receptor PK66 (PK66) of Plasmodium knowlesi (strain nuri).